Here is a 374-residue protein sequence, read N- to C-terminus: Arrestin domain-containing protein 15 (374 aa).

The disordered stretch occupies residues 344–374 (HHLNRSKAKVSKTEQQQRKTRNIVEENPYFR).

Belongs to the arrestin family.

This chain is Arrestin domain-containing protein 15 (arrd-15), found in Caenorhabditis elegans.